Here is a 400-residue protein sequence, read N- to C-terminus: Elongation factor Tu (400 aa).

In terms of domain architecture, tr-type G spans 10–209; it reads KPHVNIGTIG…EVDNYIPTPE (200 aa). The tract at residues 19–26 is G1; sequence GHVDHGKT. 19-26 is a GTP binding site; it reads GHVDHGKT. Mg(2+) is bound at residue Thr26. The tract at residues 60–64 is G2; the sequence is GITIN. Residues 81–84 are G3; sequence DCPG. Residues 81-85 and 136-139 each bind GTP; these read DCPGH and NKCD. The G4 stretch occupies residues 136-139; the sequence is NKCD. Residues 174–176 form a G5 region; that stretch reads SAL.

Belongs to the TRAFAC class translation factor GTPase superfamily. Classic translation factor GTPase family. EF-Tu/EF-1A subfamily. Monomer.

It is found in the cytoplasm. The enzyme catalyses GTP + H2O = GDP + phosphate + H(+). Functionally, GTP hydrolase that promotes the GTP-dependent binding of aminoacyl-tRNA to the A-site of ribosomes during protein biosynthesis. The sequence is that of Elongation factor Tu from Ruminiclostridium cellulolyticum (strain ATCC 35319 / DSM 5812 / JCM 6584 / H10) (Clostridium cellulolyticum).